Reading from the N-terminus, the 371-residue chain is Queuine tRNA-ribosyltransferase (371 aa).

The active-site Proton acceptor is Asp89. Substrate contacts are provided by residues 89–93 (DSGGF), Asp143, Gln185, and Gly212. An RNA binding region spans residues 243–249 (GVGKPED). Residue Asp262 is the Nucleophile of the active site. The interval 267–271 (TRNAR) is RNA binding; important for wobble base 34 recognition. Residues Cys300, Cys302, Cys305, and His331 each coordinate Zn(2+).

It belongs to the queuine tRNA-ribosyltransferase family. In terms of assembly, homodimer. Within each dimer, one monomer is responsible for RNA recognition and catalysis, while the other monomer binds to the replacement base PreQ1. It depends on Zn(2+) as a cofactor.

It carries out the reaction 7-aminomethyl-7-carbaguanine + guanosine(34) in tRNA = 7-aminomethyl-7-carbaguanosine(34) in tRNA + guanine. Its pathway is tRNA modification; tRNA-queuosine biosynthesis. Catalyzes the base-exchange of a guanine (G) residue with the queuine precursor 7-aminomethyl-7-deazaguanine (PreQ1) at position 34 (anticodon wobble position) in tRNAs with GU(N) anticodons (tRNA-Asp, -Asn, -His and -Tyr). Catalysis occurs through a double-displacement mechanism. The nucleophile active site attacks the C1' of nucleotide 34 to detach the guanine base from the RNA, forming a covalent enzyme-RNA intermediate. The proton acceptor active site deprotonates the incoming PreQ1, allowing a nucleophilic attack on the C1' of the ribose to form the product. After dissociation, two additional enzymatic reactions on the tRNA convert PreQ1 to queuine (Q), resulting in the hypermodified nucleoside queuosine (7-(((4,5-cis-dihydroxy-2-cyclopenten-1-yl)amino)methyl)-7-deazaguanosine). The sequence is that of Queuine tRNA-ribosyltransferase from Pseudomonas syringae pv. tomato (strain ATCC BAA-871 / DC3000).